A 512-amino-acid chain; its full sequence is Extracellular serine/threonine protein kinase CeFam20 (512 aa).

The Cytoplasmic portion of the chain corresponds to 1-6 (MRCNIK). The helical; Signal-anchor for type II membrane protein transmembrane segment at 7 to 26 (RLFTLAIGVFAATLVIISFS) threads the bilayer. Over 27–512 (KDNYEREWKQ…QDKKDDKKTV (486 aa)) the chain is Lumenal. Cys-110 and Cys-144 are disulfide-bonded. Asn-113 carries N-linked (GlcNAc...) asparagine glycosylation. ATP contacts are provided by Gln-176, Lys-192, and Glu-213. Glu-213 provides a ligand contact to Mn(2+). N-linked (GlcNAc...) asparagine glycosylation is present at Asn-242. 2 disulfides stabilise this stretch: Cys-268/Cys-284 and Cys-273/Cys-277. Residue 295 to 298 (QVFL) participates in ATP binding. Intrachain disulfides connect Cys-333-Cys-409 and Cys-410-Cys-469. Asp-366 is an active-site residue. The ATP site is built by Glu-371 and Asp-387. Mn(2+) is bound at residue Asp-387. Positions 486 to 512 (PDVSDAEQNDEEQSEEHQDKKDDKKTV) are disordered. The segment covering 489-499 (SDAEQNDEEQS) has biased composition (acidic residues). The segment covering 500-512 (EEHQDKKDDKKTV) has biased composition (basic and acidic residues).

The protein belongs to the FAM20 family. Mn(2+) is required as a cofactor.

The protein localises to the golgi apparatus membrane. It is found in the secreted. It catalyses the reaction L-seryl-[protein] + ATP = O-phospho-L-seryl-[protein] + ADP + H(+). It carries out the reaction L-threonyl-[protein] + ATP = O-phospho-L-threonyl-[protein] + ADP + H(+). Its function is as follows. Golgi serine/threonine protein kinase that phosphorylates secretory pathway proteins within Ser-x-Glu/pSer motifs. This Caenorhabditis elegans protein is Extracellular serine/threonine protein kinase CeFam20.